Reading from the N-terminus, the 258-residue chain is Tryptophan synthase alpha chain (258 aa).

Residues Glu52 and Asp63 each act as proton acceptor in the active site.

The protein belongs to the TrpA family. In terms of assembly, tetramer of two alpha and two beta chains.

The enzyme catalyses (1S,2R)-1-C-(indol-3-yl)glycerol 3-phosphate + L-serine = D-glyceraldehyde 3-phosphate + L-tryptophan + H2O. It functions in the pathway amino-acid biosynthesis; L-tryptophan biosynthesis; L-tryptophan from chorismate: step 5/5. The alpha subunit is responsible for the aldol cleavage of indoleglycerol phosphate to indole and glyceraldehyde 3-phosphate. The sequence is that of Tryptophan synthase alpha chain from Streptococcus pneumoniae serotype 19F (strain G54).